Here is a 239-residue protein sequence, read N- to C-terminus: Leucine rich adaptor protein 1 (239 aa).

2 LRR repeats span residues 55–83 (LGDK…LVTL) and 93–114 (LLEE…QYSL). Low complexity predominate over residues 107 to 118 (LTSSQYSLTGGS). Positions 107-140 (LTSSQYSLTGGSPERSRRGSWDSLPDTSSTDRLD) are disordered. Phosphoserine is present on residues serine 118, serine 126, and serine 129.

Forms a tripartite complex with CDC42BPA/CDC42BPB and MYO18A acting as an adapter connecting both. Its binding to CDC42BPA/CDC42BPB results in their activation by abolition of their negative autoregulation. Interacts with CDC42BPA and CDC42BPB. In terms of processing, phosphorylated.

It localises to the cytoplasm. Functionally, acts as an activator of the canonical NF-kappa-B pathway and drive the production of pro-inflammatory cytokines. Promotes the antigen (Ag)-presenting and priming function of dendritic cells via the canonical NF-kappa-B pathway. In concert with MYO18A and CDC42BPA/CDC42BPB, is involved in modulating lamellar actomyosin retrograde flow that is crucial to cell protrusion and migration. Activates CDC42BPA/CDC42BPB and targets it to actomyosin through its interaction with MYO18A, leading to MYL9/MLC2 phosphorylation and MYH9/MYH10-dependent actomyosin assembly in the lamella. This Rattus norvegicus (Rat) protein is Leucine rich adaptor protein 1 (Lurap1).